Here is a 201-residue protein sequence, read N- to C-terminus: 3-isopropylmalate dehydratase small subunit (201 aa).

Belongs to the LeuD family. LeuD type 1 subfamily. In terms of assembly, heterodimer of LeuC and LeuD.

It catalyses the reaction (2R,3S)-3-isopropylmalate = (2S)-2-isopropylmalate. Its pathway is amino-acid biosynthesis; L-leucine biosynthesis; L-leucine from 3-methyl-2-oxobutanoate: step 2/4. Catalyzes the isomerization between 2-isopropylmalate and 3-isopropylmalate, via the formation of 2-isopropylmaleate. This is 3-isopropylmalate dehydratase small subunit from Shigella boydii serotype 18 (strain CDC 3083-94 / BS512).